The primary structure comprises 188 residues: Small ribosomal subunit protein uS7 (188 aa).

The protein belongs to the universal ribosomal protein uS7 family. In terms of assembly, part of the 30S ribosomal subunit.

Functionally, one of the primary rRNA binding proteins, it binds directly to 16S rRNA where it nucleates assembly of the head domain of the 30S subunit. Is located at the subunit interface close to the decoding center. In Methanococcus maripaludis (strain C6 / ATCC BAA-1332), this protein is Small ribosomal subunit protein uS7.